A 305-amino-acid chain; its full sequence is MILTAMQDAIGRTPIFKFTRKDYPIPLKSAIYAKLEHLNPGGSVKDRLGQYLIKEAFRTRKITSTTTIIEPTAGNTGIALALVAIKHHLKTIFVVPKKFSTEKQQIMRALGALVINTPTSEGISGAIKKSKELAESIPDSYLPLQFENPDNPAAYYHTLAPEIVQELGTNLTSFVAGIGSGGTFAGMAKYLKERIPNIRLIGVEPEGSILNGGEPGPHEIEGIGVEFIPPFFANLDIDRFETISDEEGFSYTRKLAKKNGLLVGSSSGAAFAAALKEVQRLPEGSQVLTIFPDMADRYLSKGIYS.

At lysine 45 the chain carries N6-(pyridoxal phosphate)lysine. Pyridoxal 5'-phosphate contacts are provided by residues asparagine 75, 179–183, and serine 266; that span reads GSGGT.

Belongs to the cysteine synthase/cystathionine beta-synthase family. As to quaternary structure, homodimer. Pyridoxal 5'-phosphate is required as a cofactor.

It catalyses the reaction O-acetyl-L-serine + hydrogen sulfide = L-cysteine + acetate. It participates in amino-acid biosynthesis; L-cysteine biosynthesis; L-cysteine from L-serine: step 2/2. This chain is Cysteine synthase (cysM), found in Helicobacter pylori (strain J99 / ATCC 700824) (Campylobacter pylori J99).